The sequence spans 334 residues: MCEENVHVSEDVAGSHGSFTNARPRLIVLIRHGESESNKNKEVNGYIPNHLISLTKTGQIQARQAGIDLLRVLNVDDHNLVEDLAKKYIKDESSRRTLPLKDYTRLSREKDTNIVFYTSPYRRARETLKGILDVIDEYNELNSGVRICEDMRYDPHGKQKHAFWPRGLNNTGGVYENNEDNICEGKPGKCYLQYRVKDEPRIREQDFGNFQKINSMQDVMKKRSTYGHFFFRFPHGESAADVYDRVASFQETLFRHFHDRQERRPRDVVVLVTHGIYSRVFLMKWFRWTYEEFESFTNVPNGSVMVMELDESINRYVLRTVLPKWTDCEGDLTT.

His-32 functions as the Tele-phosphohistidine intermediate in the catalytic mechanism. Residues Asn-38, 44–45, and Arg-108 each bind substrate; that span reads NG. Glu-126 serves as the catalytic Proton donor/acceptor. Residues 168–171 and 195–205 each bind substrate; these read LNNT and RVKDEPRIREQ. Residue Ser-248 is modified to Phosphoserine.

The protein belongs to the phosphoglycerate mutase family.

It is found in the cytoplasm. Its subcellular location is the nucleus. Metal-independent, broad-range acid phosphatase. Involved, either directly or indirectly, in the bidirectional transport of sterols between the endoplasmic reticulum and the plasma membrane. The polypeptide is Broad-range acid phosphatase DET1 (DET1) (Saccharomyces cerevisiae (strain ATCC 204508 / S288c) (Baker's yeast)).